Here is a 347-residue protein sequence, read N- to C-terminus: NADH-ubiquinone oxidoreductase chain 2 (347 aa).

Helical transmembrane passes span 3-23, 25-45, 59-79, 93-115, 149-169, 178-198, 200-220, 242-262, 274-294, and 323-343; these read PPIL…VLTS, HWLL…PILM, YFLT…INLL, MAST…HFWV, INTN…GWGG, ILAY…TYNP, VMIL…MLFI, SFIL…GFIP, EMII…YFYM, and MALL…TPMM.

It belongs to the complex I subunit 2 family. In terms of assembly, core subunit of respiratory chain NADH dehydrogenase (Complex I) which is composed of 45 different subunits. Interacts with TMEM242.

It is found in the mitochondrion inner membrane. It carries out the reaction a ubiquinone + NADH + 5 H(+)(in) = a ubiquinol + NAD(+) + 4 H(+)(out). Its function is as follows. Core subunit of the mitochondrial membrane respiratory chain NADH dehydrogenase (Complex I) which catalyzes electron transfer from NADH through the respiratory chain, using ubiquinone as an electron acceptor. Essential for the catalytic activity and assembly of complex I. The chain is NADH-ubiquinone oxidoreductase chain 2 from Nandinia binotata (African palm civet).